Reading from the N-terminus, the 324-residue chain is MEIVAIDIGGTHARFSIAEVSNGRVLSLGEETTFKTAEHASLQLAWERFGEKLGRPLPRAAAIAWAGPVHGEVLKLTNNPWVLRPATLNEKLDIDTHVLINDFGAVAHAVAHMDSSYLDHICGPDEALPSDGVITILGPGTGLGVAHLLRTEGRYFVIETEGGHIDFAPLDRLEDKILARLRERFRRVSIERIISGPGLGNIYEALAAIEGVPFSLLDDIKLWQMALEGKDNLAEAALDRFCLSLGAIAGDLALAQGATSVVIGGGVGLRIASHLPESGFRQRFVSKGRFERVMSKIPVKLITYPQPGLLGAAAAYANKYSEVE.

6–11 (IDIGGT) contributes to the ATP binding site.

It belongs to the bacterial glucokinase family.

The protein localises to the cytoplasm. It carries out the reaction D-glucose + ATP = D-glucose 6-phosphate + ADP + H(+). This is Glucokinase from Zymomonas mobilis subsp. mobilis (strain ATCC 31821 / ZM4 / CP4).